A 416-amino-acid chain; its full sequence is Adenylosuccinate synthetase (416 aa).

GTP is bound by residues 13–19 and 41–43; these read GDEGKGK and GHT. Aspartate 14 (proton acceptor) is an active-site residue. Aspartate 14 and glycine 41 together coordinate Mg(2+). Residues 14-17, 39-42, threonine 126, arginine 140, glutamine 220, threonine 235, and arginine 299 contribute to the IMP site; these read DEGK and NAGH. Histidine 42 (proton donor) is an active-site residue. Residue 295–301 participates in substrate binding; sequence VSTGRKR. Residues arginine 301, 327 to 329, and 405 to 407 contribute to the GTP site; these read KLD and STS.

It belongs to the adenylosuccinate synthetase family. As to quaternary structure, homodimer. The cofactor is Mg(2+).

The protein localises to the cytoplasm. It catalyses the reaction IMP + L-aspartate + GTP = N(6)-(1,2-dicarboxyethyl)-AMP + GDP + phosphate + 2 H(+). The protein operates within purine metabolism; AMP biosynthesis via de novo pathway; AMP from IMP: step 1/2. In terms of biological role, plays an important role in the de novo pathway of purine nucleotide biosynthesis. Catalyzes the first committed step in the biosynthesis of AMP from IMP. The polypeptide is Adenylosuccinate synthetase (Campylobacter lari (strain RM2100 / D67 / ATCC BAA-1060)).